The sequence spans 349 residues: Putative F-box/LRR-repeat protein At3g16555 (349 aa).

The F-box domain occupies 1–48 (MVLLPWELEEDILSRLPPRSLVQFRSVCKRWNALFDVKSFNKDQFARA). The LRR repeat unit spans residues 267–290 (VVWISLLTLPPNNLPNLFIVCYGI).

The sequence is that of Putative F-box/LRR-repeat protein At3g16555 from Arabidopsis thaliana (Mouse-ear cress).